The following is a 654-amino-acid chain: NADPH-dependent diflavin oxidoreductase 1 (654 aa).

The segment covering 1–10 (MSGSQSSGSP) has biased composition (low complexity). Residues 1–22 (MSGSQSSGSPGSPGPPGPPGRS) form a disordered region. The 145-residue stretch at 23–167 (ALVVYGSETG…TFIPWLAGFR (145 aa)) folds into the Flavodoxin-like domain. FMN is bound by residues 29-34 (SETGNA), 76-79 (STTG), and 114-123 (LGDSSYPKFN). An FAD-binding FR-type domain is found at 235 to 485 (HDSLTATLVQ…QLQRGGLNSS (251 aa)). FAD is bound by residues Arg389, 419-422 (RQFS), and 458-461 (GVCT). NADP(+) is bound by residues Thr500, 568-569 (SR), and 574-578 (KVYVQ). Trp654 contributes to the FAD binding site.

Belongs to the NADPH-dependent diflavin oxidoreductase NDOR1 family. This sequence in the N-terminal section; belongs to the flavodoxin family. The protein in the C-terminal section; belongs to the flavoprotein pyridine nucleotide cytochrome reductase family. Interacts with dre2; as part of the cytosolic iron-sulfur (Fe-S) protein assembly (CIA) machinery. It depends on FAD as a cofactor. Requires FMN as cofactor.

It is found in the cytoplasm. It localises to the mitochondrion. It carries out the reaction 2 oxidized [2Fe-2S]-[protein] + NADPH = 2 reduced [2Fe-2S]-[protein] + NADP(+) + H(+). Functionally, NADPH-dependent reductase which is a central component of the cytosolic iron-sulfur (Fe-S) protein assembly (CIA) machinery. Transfers electrons from NADPH via its FAD and FMN prosthetic groups to the [2Fe-2S] cluster of dre2, another key component of the CIA machinery. In turn, this reduced cluster provides electrons for assembly of cytosolic iron-sulfur cluster proteins. Positively controls H(2)O(2)-induced cell death. The protein is NADPH-dependent diflavin oxidoreductase 1 of Emericella nidulans (strain FGSC A4 / ATCC 38163 / CBS 112.46 / NRRL 194 / M139) (Aspergillus nidulans).